Here is an 87-residue protein sequence, read N- to C-terminus: U3-theraphotoxin-Cg1b (87 aa).

Positions 1–23 (MRTFTLIAILTCAVLVIFHVSAA) are cleaved as a signal peptide. Positions 24-48 (EELEAQDVIQPEDIFTGVATLEEDR) are excised as a propeptide. Disulfide bonds link C52–C65, C56–C79, and C73–C84.

It belongs to the neurotoxin 12 (Hwtx-2) family. 03 (juruin) subfamily. In terms of tissue distribution, expressed by the venom gland.

Its subcellular location is the secreted. Functionally, probable ion channel inhibitor. In Chilobrachys guangxiensis (Chinese earth tiger tarantula), this protein is U3-theraphotoxin-Cg1b.